The primary structure comprises 315 residues: Carbamate kinase (315 aa).

Belongs to the carbamate kinase family. As to quaternary structure, homodimer.

The protein resides in the cytoplasm. The catalysed reaction is hydrogencarbonate + NH4(+) + ATP = carbamoyl phosphate + ADP + H2O + H(+). In Thermococcus kodakarensis (strain ATCC BAA-918 / JCM 12380 / KOD1) (Pyrococcus kodakaraensis (strain KOD1)), this protein is Carbamate kinase (cpkA).